Reading from the N-terminus, the 286-residue chain is Quinone oxidoreductase 2 (286 aa).

Residues 6–11 (GATGQL), Arg33, 73–75 (SSS), 138–143 (GWYSEN), and Arg171 each bind NADP(+).

Belongs to the NmrA-type oxidoreductase family. Monomer.

The enzyme catalyses a quinone + NADH + H(+) = a quinol + NAD(+). The catalysed reaction is a quinone + NADPH + H(+) = a quinol + NADP(+). Functionally, quinone oxidoreductase that may play some additional role beyond quinone reduction. Potential redox sensor protein. Overexpression induces retardation of growth. This Escherichia coli (strain K12) protein is Quinone oxidoreductase 2 (qorB).